A 289-amino-acid polypeptide reads, in one-letter code: Inorganic pyrophosphatase (289 aa).

N-acetylserine is present on S2. K57 is modified (N6-acetyllysine). Mg(2+) contacts are provided by D116, D121, and D153. K228 is modified (N6-acetyllysine). S250 is subject to Phosphoserine.

This sequence belongs to the PPase family. As to quaternary structure, homodimer. The cofactor is Mg(2+).

The protein localises to the cytoplasm. It carries out the reaction diphosphate + H2O = 2 phosphate + H(+). This chain is Inorganic pyrophosphatase (Ppa1), found in Mus musculus (Mouse).